A 426-amino-acid polypeptide reads, in one-letter code: Mannose-1-phosphate guanyltransferase alpha-B (426 aa).

It belongs to the transferase hexapeptide repeat family.

It catalyses the reaction alpha-D-mannose 1-phosphate + GTP + H(+) = GDP-alpha-D-mannose + diphosphate. The protein operates within nucleotide-sugar biosynthesis; GDP-alpha-D-mannose biosynthesis; GDP-alpha-D-mannose from alpha-D-mannose 1-phosphate (GTP route): step 1/1. The polypeptide is Mannose-1-phosphate guanyltransferase alpha-B (gmppa-b) (Xenopus laevis (African clawed frog)).